We begin with the raw amino-acid sequence, 354 residues long: Protein RecA (354 aa).

An ATP-binding site is contributed by glycine 67–threonine 74.

It belongs to the RecA family.

The protein localises to the cytoplasm. In terms of biological role, can catalyze the hydrolysis of ATP in the presence of single-stranded DNA, the ATP-dependent uptake of single-stranded DNA by duplex DNA, and the ATP-dependent hybridization of homologous single-stranded DNAs. It interacts with LexA causing its activation and leading to its autocatalytic cleavage. The protein is Protein RecA of Pasteurella multocida (strain Pm70).